The primary structure comprises 469 residues: Bifunctional protein GlmU (469 aa).

The interval methionine 1–cysteine 236 is pyrophosphorylase. Residues leucine 11–glycine 14, lysine 25, glutamine 83, glycine 88–threonine 89, tyrosine 110–aspartate 112, glycine 147, glutamate 161, asparagine 176, and asparagine 234 each bind UDP-N-acetyl-alpha-D-glucosamine. A Mg(2+)-binding site is contributed by aspartate 112. Asparagine 234 is a binding site for Mg(2+). Residues alanine 237–isoleucine 257 form a linker region. Residues glycine 258–tyrosine 469 form an N-acetyltransferase region. UDP-N-acetyl-alpha-D-glucosamine is bound by residues arginine 340 and lysine 358. Residue histidine 370 is the Proton acceptor of the active site. Tyrosine 373 and asparagine 384 together coordinate UDP-N-acetyl-alpha-D-glucosamine. Residues alanine 387, asparagine 393–tyrosine 394, serine 412, alanine 430, and arginine 447 contribute to the acetyl-CoA site.

This sequence in the N-terminal section; belongs to the N-acetylglucosamine-1-phosphate uridyltransferase family. In the C-terminal section; belongs to the transferase hexapeptide repeat family. In terms of assembly, homotrimer. Mg(2+) serves as cofactor.

The protein localises to the cytoplasm. It carries out the reaction alpha-D-glucosamine 1-phosphate + acetyl-CoA = N-acetyl-alpha-D-glucosamine 1-phosphate + CoA + H(+). The catalysed reaction is N-acetyl-alpha-D-glucosamine 1-phosphate + UTP + H(+) = UDP-N-acetyl-alpha-D-glucosamine + diphosphate. It functions in the pathway nucleotide-sugar biosynthesis; UDP-N-acetyl-alpha-D-glucosamine biosynthesis; N-acetyl-alpha-D-glucosamine 1-phosphate from alpha-D-glucosamine 6-phosphate (route II): step 2/2. The protein operates within nucleotide-sugar biosynthesis; UDP-N-acetyl-alpha-D-glucosamine biosynthesis; UDP-N-acetyl-alpha-D-glucosamine from N-acetyl-alpha-D-glucosamine 1-phosphate: step 1/1. It participates in bacterial outer membrane biogenesis; LPS lipid A biosynthesis. In terms of biological role, catalyzes the last two sequential reactions in the de novo biosynthetic pathway for UDP-N-acetylglucosamine (UDP-GlcNAc). The C-terminal domain catalyzes the transfer of acetyl group from acetyl coenzyme A to glucosamine-1-phosphate (GlcN-1-P) to produce N-acetylglucosamine-1-phosphate (GlcNAc-1-P), which is converted into UDP-GlcNAc by the transfer of uridine 5-monophosphate (from uridine 5-triphosphate), a reaction catalyzed by the N-terminal domain. This is Bifunctional protein GlmU from Baumannia cicadellinicola subsp. Homalodisca coagulata.